A 237-amino-acid polypeptide reads, in one-letter code: Small ribosomal subunit protein uS2c (237 aa).

The protein belongs to the universal ribosomal protein uS2 family.

The protein resides in the plastid. This chain is Small ribosomal subunit protein uS2c (rps2), found in Epifagus virginiana (Beechdrops).